A 103-amino-acid chain; its full sequence is NADH dehydrogenase [ubiquinone] 1 beta subcomplex subunit 7 (103 aa).

One can recognise a CHCH domain in the interval 27–69 (RDMCAHLLIPLNKCRQAEFYLPWKCEDERHVYEKCEYELVMER). 2 consecutive short sequence motifs (cx9C motif) follow at residues 30–40 (CAHLLIPLNKC) and 51–61 (CEDERHVYEKC). 2 cysteine pairs are disulfide-bonded: C30/C61 and C40/C51.

Belongs to the complex I NDUFB7 subunit family. As to quaternary structure, complex I is composed of at least 49 different subunits.

It is found in the mitochondrion. It localises to the mitochondrion inner membrane. Its subcellular location is the mitochondrion intermembrane space. Its function is as follows. Accessory subunit of the mitochondrial membrane respiratory chain NADH dehydrogenase (Complex I), that is believed not to be involved in catalysis. Complex I functions in the transfer of electrons from NADH to the respiratory chain. The immediate electron acceptor for the enzyme is believed to be ubiquinone. This is NADH dehydrogenase [ubiquinone] 1 beta subcomplex subunit 7 from Arabidopsis thaliana (Mouse-ear cress).